We begin with the raw amino-acid sequence, 101 residues long: Acylphosphatase (101 aa).

An Acylphosphatase-like domain is found at 15-101 (RMYARVYGLV…KGEFEDFETY (87 aa)). Residues R30 and N48 contribute to the active site.

Belongs to the acylphosphatase family.

It carries out the reaction an acyl phosphate + H2O = a carboxylate + phosphate + H(+). The protein is Acylphosphatase (acyP) of Saccharolobus solfataricus (strain ATCC 35092 / DSM 1617 / JCM 11322 / P2) (Sulfolobus solfataricus).